The chain runs to 156 residues: MEKIPMTPSGFAALEAELKQLKSVERPAIIKAIAEAREHGDLSENAEYHSAREKQSFIEGRIKELEGVLSLADVIDPTKLSGAIKFGARVTLVDEDTDEEKTWQIVGEHEANIEKGLLNIKSPIARALIGKDEGDSVEVKTPGGQKSYEILSIEYS.

Residues alanine 46–glutamate 66 are a coiled coil.

This sequence belongs to the GreA/GreB family.

Its function is as follows. Necessary for efficient RNA polymerase transcription elongation past template-encoded arresting sites. The arresting sites in DNA have the property of trapping a certain fraction of elongating RNA polymerases that pass through, resulting in locked ternary complexes. Cleavage of the nascent transcript by cleavage factors such as GreA or GreB allows the resumption of elongation from the new 3'terminus. GreA releases sequences of 2 to 3 nucleotides. In Ruegeria pomeroyi (strain ATCC 700808 / DSM 15171 / DSS-3) (Silicibacter pomeroyi), this protein is Transcription elongation factor GreA.